The primary structure comprises 381 residues: Cobalt-precorrin-5B C(1)-methyltransferase (381 aa).

The protein belongs to the CbiD family.

The catalysed reaction is Co-precorrin-5B + S-adenosyl-L-methionine = Co-precorrin-6A + S-adenosyl-L-homocysteine. It functions in the pathway cofactor biosynthesis; adenosylcobalamin biosynthesis; cob(II)yrinate a,c-diamide from sirohydrochlorin (anaerobic route): step 6/10. Its function is as follows. Catalyzes the methylation of C-1 in cobalt-precorrin-5B to form cobalt-precorrin-6A. This chain is Cobalt-precorrin-5B C(1)-methyltransferase, found in Clostridium botulinum (strain Eklund 17B / Type B).